The chain runs to 682 residues: DNA ligase (682 aa).

Residues D42 to D46, S91 to L92, and E124 contribute to the NAD(+) site. The N6-AMP-lysine intermediate role is filled by K126. The NAD(+) site is built by R147, E184, K302, and K326. C420, C423, C438, and C444 together coordinate Zn(2+). The region spanning I603 to N682 is the BRCT domain.

Belongs to the NAD-dependent DNA ligase family. LigA subfamily. Mg(2+) serves as cofactor. It depends on Mn(2+) as a cofactor.

The enzyme catalyses NAD(+) + (deoxyribonucleotide)n-3'-hydroxyl + 5'-phospho-(deoxyribonucleotide)m = (deoxyribonucleotide)n+m + AMP + beta-nicotinamide D-nucleotide.. Functionally, DNA ligase that catalyzes the formation of phosphodiester linkages between 5'-phosphoryl and 3'-hydroxyl groups in double-stranded DNA using NAD as a coenzyme and as the energy source for the reaction. It is essential for DNA replication and repair of damaged DNA. In Actinobacillus pleuropneumoniae serotype 7 (strain AP76), this protein is DNA ligase.